The primary structure comprises 158 residues: Large ribosomal subunit protein bL17 (158 aa).

The segment at 119–158 (APAAAPEAEEKGEKKAAKAPKAEKAPKAEKKPAKKAAKAE) is disordered. Over residues 126–158 (AEEKGEKKAAKAPKAEKAPKAEKKPAKKAAKAE) the composition is skewed to basic and acidic residues.

It belongs to the bacterial ribosomal protein bL17 family. As to quaternary structure, part of the 50S ribosomal subunit. Contacts protein L32.

The chain is Large ribosomal subunit protein bL17 from Anaeromyxobacter sp. (strain K).